We begin with the raw amino-acid sequence, 194 residues long: Putative 3-methyladenine DNA glycosylase (194 aa).

The protein belongs to the DNA glycosylase MPG family.

The chain is Putative 3-methyladenine DNA glycosylase from Myxococcus xanthus (strain DK1622).